Reading from the N-terminus, the 458-residue chain is MSSKLATPLSIQGEVIYPDDSGFDAIANIWDGRHLQRPSLIARCLSAGDVAKSVRYACDNGLEISVRSGGHNPNGYATNDGGIVLDLRLMNSIHIDTAGSRARIGGGVISGDLVKEAAKFGLAAVTGMHPKVGFCGLALNGGVGFLTPKYGLASDNILGATLVTATGDVIYCSDDERPELFWAVRGAGPNFGVVTEVEVQLYELPRKMLAGFITWAPSVSELAGLLTSLLDALNEMADHIYPSVFVGVDENRAPSVTVCVGHLGGLDIAERDIARLRGLGRTVSDSIAVRSYDEVVALNAEVGSFEDGMSNLWIDREIAMPNARFAEAIAGNLDKFVSEPASGGSVKLEIEGMPFGNPKRTPARHRDAMGVLALAEWSGAAPGSEKYPELARELDAALLRAGVTTSGFGLLNNNSEVTAEMVAEVYKPEVYCRLAAVKREYDPENRFRHNYNIDPEGS.

An FAD-binding PCMH-type domain is found at 33–204 (RHLQRPSLIA…TEVEVQLYEL (172 aa)). Residues 67-73 (RSGGHNP), 129-130 (HP), 134-137 (FCGL), G144, T195, N413, and N450 contribute to the FAD site. The residue at position 71 (H71) is a Pros-8alpha-FAD histidine.

This sequence belongs to the oxygen-dependent FAD-linked oxidoreductase family. In terms of assembly, monomer. It depends on FAD as a cofactor.

It is found in the cytoplasm. The enzyme catalyses (R)-6-hydroxynicotine + O2 + H2O = 6-hydroxypseudooxynicotine + H2O2. It catalyses the reaction (R)-6-hydroxynicotine + O2 = 6-hydroxy-N-methylmyosmine + H2O2. It participates in alkaloid degradation; nicotine degradation; 6-hydroxypseudooxynicotine from nicotine (R-isomer route): step 2/2. With respect to regulation, inhibited by (S)-6-hydroxynicotine. Inhibited by high concentrations of phenanthroline. Involved in the degradation of D-nicotine. Catalyzes the oxidation of (R)-6-hydroxynicotine (6-hydroxy-D-nicotine) to 6-hydroxypseudooxynicotine. Oxidation of the pyrrolidine ring of (R)-6-hydroxynicotine leads to the formation of the optically inactive 6-hydroxy-N-methylmyosmine, which hydrolyzes spontaneously to 6-hydroxypseudooxynicotine. Acts with absolute stereospecificity on the D-form of 6-hydroxynicotine. Shows lower activity with (R)-6-hydroxynornicotine, and weak activity with (R)-4-(1-methylpyrrolidine-2-yl)phenol, (R)-6-chloronicotine and (R)-nicotine. The polypeptide is (R)-6-hydroxynicotine oxidase (Paenarthrobacter nicotinovorans (Arthrobacter nicotinovorans)).